The following is a 1180-amino-acid chain: RecBCD enzyme subunit RecB (1180 aa).

The UvrD-like helicase ATP-binding domain maps to 2-450 (SDVAETLDPL…YTLDTNWRSA (449 aa)). The interval 2-853 (SDVAETLDPL…KGEPQDAAGL (852 aa)) is ATPase, DNA-binding and helicase activity, interacts with RecC. ATP is bound at residue 23–30 (ASAGTGKT). Residues 252-254 (IDR) mediate DNA binding. Residue tryptophan 447 coordinates ATP. Residues 480-746 (SAGKNQALRF…QIVTIHKSKG (267 aa)) form the UvrD-like helicase C-terminal domain. 3 consecutive DNA-binding regions follow at residues 511-512 (VG), 560-561 (SR), and arginine 761. The nuclease activity, interacts with RecD and RecA stretch occupies residues 900–1180 (NWRVTSYSGL…MFAGMTLEEA (281 aa)). 4 residues coordinate Mg(2+): histidine 956, aspartate 1067, aspartate 1080, and tyrosine 1081. Aspartate 1080 (for nuclease activity) is an active-site residue.

It belongs to the helicase family. UvrD subfamily. Heterotrimer of RecB, RecC and RecD. All subunits contribute to DNA-binding. The C-terminus interacts with RecA. Interacts with YgbT (Cas1). In terms of assembly, (Microbial infection) Lambda virus GamS protein interacts with the enzyme without displacing any of the subunits. It depends on Mg(2+) as a cofactor.

The enzyme catalyses Exonucleolytic cleavage (in the presence of ATP) in either 5'- to 3'- or 3'- to 5'-direction to yield 5'-phosphooligonucleotides.. It catalyses the reaction Couples ATP hydrolysis with the unwinding of duplex DNA by translocating in the 3'-5' direction.. The catalysed reaction is ATP + H2O = ADP + phosphate + H(+). After reacting with DNA bearing a Chi site the holoenzyme is disassembled and loses exonuclease activity, DNA unwinding and Chi-directed DNA cleavage; RecB remains complexed with ssDNA, which may prevent holoenzyme reassembly. High levels of Mg(2+) (13 mM MgCl(2+)) or incubation with DNase allows holoenzyme reassembly, suggesting it is DNA bound to RecB that prevents reassembly. Its activity is regulated as follows. (Microbial infection) RecBCD is inhibited by the lambda virus gam protein (both GamL and GamS isoforms); in vitro a short preincubation prior to adding DNA results in maximal inhibition. In terms of biological role, a helicase/nuclease that prepares dsDNA breaks (DSB) for recombinational DNA repair. Binds to DSBs and unwinds DNA via a rapid (&gt;1 kb/second) and highly processive (&gt;30 kb) ATP-dependent bidirectional helicase. Unwinds dsDNA until it encounters a Chi (crossover hotspot instigator, 5'-GCTGGTGG-3') sequence from the 3' direction. Cuts ssDNA a few nucleotides 3' to Chi site, by nicking one strand or switching the strand degraded (depending on the reaction conditions). The properties and activities of the enzyme are changed at Chi. The Chi-altered holoenzyme produces a long 3'-ssDNA overhang which facilitates RecA-binding to the ssDNA for homologous DNA recombination and repair. Holoenzyme degrades any linearized DNA that is unable to undergo homologous recombination. In the holoenzyme this subunit contributes ATPase, 3'-5' helicase, exonuclease activity and loads RecA onto ssDNA. The RecBC complex requires the RecD subunit for nuclease activity, but can translocate along ssDNA in both directions. The RecBCD complex does not unwind G-quadruplex DNA. Probably interacts with a component of retron Ec48 which moniters RecBCD stability; when RecB is missing or impaired the retron is activated and becomes toxic. The chain is RecBCD enzyme subunit RecB from Escherichia coli (strain K12).